We begin with the raw amino-acid sequence, 170 residues long: MSDEILNGAAAPADAAAGPAFTIEKIYVKDVSFESPNAPAVFNDANQPELQLNLNQKVQRLNDNAFEVVLAVTLTCTAGGKTAYVAEVQQAGVFGLVGLDPQAIDVLLGTQCPNILFPYVRTLVSDLIQAGGFPPFYLQPINFEALYAETLRQRQNEGTSLADSEPAGNA.

The protein belongs to the SecB family. Homotetramer, a dimer of dimers. One homotetramer interacts with 1 SecA dimer.

The protein localises to the cytoplasm. Its function is as follows. One of the proteins required for the normal export of preproteins out of the cell cytoplasm. It is a molecular chaperone that binds to a subset of precursor proteins, maintaining them in a translocation-competent state. It also specifically binds to its receptor SecA. The sequence is that of Protein-export protein SecB from Xanthomonas axonopodis pv. citri (strain 306).